The sequence spans 252 residues: Nuclease C1 (252 aa).

The active-site Proton acceptor is histidine 87. Residue asparagine 119 participates in Mg(2+) binding.

The protein belongs to the DNA/RNA non-specific endonuclease family. The cofactor is Mg(2+). Mn(2+) is required as a cofactor.

It is found in the secreted. This enzyme has both RNase and DNase activity. The polypeptide is Nuclease C1 (NUC1CE) (Cunninghamella echinulata var. echinulata).